The sequence spans 363 residues: Dioxygenase sphC (363 aa).

3 residues coordinate Fe cation: His183, Asp185, and His259.

This sequence belongs to the PhyH family. As to quaternary structure, homodimer. The cofactor is Fe cation.

It carries out the reaction sphingofungin B1 + 2-oxoglutarate + O2 = sphingofungin B + succinate + CO2. It participates in secondary metabolite biosynthesis. Dioxygenase; part of the gene cluster that mediates the biosynthesis of sphingofungins, bioactive molecules acting as sphingolipid inhibitors via inhibiting serine palmitoyl transferase (SPT). Within the pathway, sphC catalyzes the hydrolxylation at C-4 to convert sphingofungin B1 into sphingofungin B as well as presphingofungin into sphingofungin B2. Sphingofungin biosynthesis starts with the PKS sphB that produces an C18 polyketide precursor 3-hydroxyoctadeca-4,10-dienoyl-ACP containing one delta-6 desaturation and one delta-12 desaturation. The aminoacyl transferase sphA uses the sphB product to produce 3-keto-presphingofungin by adding an aminomalonate molecule. SphF then reduces the C-3 ketone of 3-keto-presphingofungin which leads to presphingofungin. The cytochrome P450 monooxygenase sphH converts presphingofungin into sphingofungin B1 which is further converted to sphingofungin B by the dioxygenase sphC. SphC is also able to convert presphingofungin into sphingofungin B2. The acetyltransferase sphE acetylates sphingofungin B to produce sphingofungin C, but can also convert sphingofungin B1 into sphingofungin C1 and sphingofungin B2 into sphingofungin C2. Finally, sphingofungin C can be spontaneously converted into sphingofungin D. In Aspergillus fumigatus (strain CBS 144.89 / FGSC A1163 / CEA10) (Neosartorya fumigata), this protein is Dioxygenase sphC.